We begin with the raw amino-acid sequence, 353 residues long: MSEPLKPRIDFAEPLKEEPTSAFKAQQTFSEAESRTFAPAAIDERPEDEGVAEAAVDAALRPKRSLWRKMVMGGLALFGASVVGQGLQWTMNAWQTQDWVALGGCAAGALIIGAGVGSVVTEWRRLWRLRQRAHERDEARELLHSHSVGKGRAFCEKLAQQAGIDQSHPALQRWYAAIHETQNDREVVGLYAHLVQPVLDAQARREISRFAAESTLMIAVSPLALVDMAFIAWRNLRLINRIATLYGIELGYYSRLRLFRLVLLNIAFAGASELVREVGMDWMSQDLAARLSTRAAQGIGAGLLTARLGIKAMELCRPLPWIDNDKPRLGDFRRQLIGQLKETLQKSKSSPEK.

A compositionally biased stretch (basic and acidic residues) spans M1–P19. Residues M1 to R35 form a disordered region. The next 3 helical transmembrane spans lie at M70–T90, V100–V120, and E213–W233.

It belongs to the UPF0283 family.

It is found in the cell inner membrane. In Salmonella choleraesuis (strain SC-B67), this protein is UPF0283 membrane protein YcjF.